Consider the following 382-residue polypeptide: MSLVEIIEGKARILIPNYKDYMKDGKFDPSWAPVFYNPKMILNRDLSVLAANVVKPKSLIDGLSATGVRGIRYGLEINGVEEIILNDIDSDAVELIKKNVKINDLESRAKIYNNNINSLLHEIKVDYVDIDPFGSPAPFLLSSFSAAKSKQYVAITATDLAALMCSSKTSARRKYGLICNKMSFSRELGLRGLISKAITEAAVVEKAVTPVFSFYNDYYYRVIFKVERGAKKVDRQLSKLVYYYECPKCGYRIESEYLQQMKCTNCNLVMQTYGPAYKESLVDYEFLNNMISELDKFSYFQTFSKLKSILLTIKDESKYSENYYRIDFLASLARVNVPRRDNVINCLVDASRTHLDPLGVKTSKNLDEIKECIKKLSSRNTS.

The Trm1 methyltransferase domain maps to 4-373 (VEIIEGKARI…KNLDEIKECI (370 aa)). S-adenosyl-L-methionine-binding residues include Arg-44, Arg-69, and Asp-87. Residues Cys-246, Cys-249, Cys-263, and Cys-266 each coordinate Zn(2+).

Belongs to the class I-like SAM-binding methyltransferase superfamily. Trm1 family.

The catalysed reaction is guanosine(26) in tRNA + 2 S-adenosyl-L-methionine = N(2)-dimethylguanosine(26) in tRNA + 2 S-adenosyl-L-homocysteine + 2 H(+). In terms of biological role, dimethylates a single guanine residue at position 26 of a number of tRNAs using S-adenosyl-L-methionine as donor of the methyl groups. The polypeptide is tRNA (guanine(26)-N(2))-dimethyltransferase (Sulfolobus acidocaldarius (strain ATCC 33909 / DSM 639 / JCM 8929 / NBRC 15157 / NCIMB 11770)).